The chain runs to 110 residues: MHLKASSILALLVIGANAYPASANSAAALVPEPQQPEAPAVAGSTVGAQVDIHHPRLEARYGRDEPQIMCGYCGKRFWNKPDLEKHIKLKPSKGGHKGQPYKEHSWNRPT.

Residues 1 to 18 (MHLKASSILALLVIGANA) form the signal peptide. Residues 68 to 96 (IMCGYCGKRFWNKPDLEKHIKLKPSKGGH) form a C2H2-type zinc finger. The disordered stretch occupies residues 88–110 (KLKPSKGGHKGQPYKEHSWNRPT). Positions 100–110 (PYKEHSWNRPT) are enriched in basic and acidic residues.

The protein resides in the secreted. Its subcellular location is the host nucleus. In terms of biological role, secreted effector that translocates into the nuclei of host cells to reprogram the expression of immunity-associated genes by binding to effector binding elements (EBEs) in rice. Binds the 5'-CCACCTCC-3' EBE of promoters from targeted rice genes and probably recruits a yet to be determined host repressor. Causes ambivalent immunity with increased susceptibility to the hemibiotrophic pathogens Magnaporthe oryzae and Xanthomonas oryzae pv. oryzae, but enhances resistance to Cochliobolus miyabeanus, a necrotrophic pathogen. The chain is Host transcription reprogramming factor 2 from Pyricularia oryzae (strain 70-15 / ATCC MYA-4617 / FGSC 8958) (Rice blast fungus).